Here is a 63-residue protein sequence, read N- to C-terminus: Large ribosomal subunit protein uL29 (63 aa).

Belongs to the universal ribosomal protein uL29 family.

The polypeptide is Large ribosomal subunit protein uL29 (Shewanella frigidimarina (strain NCIMB 400)).